A 209-amino-acid chain; its full sequence is MAKLYFYYAAMNAGKSTVLLQSSYNYRERGMQTLLFTPAIDTRFQYGTICSRIGLSEQAYAFNNSDNLYVLTQEFQLQTQKYSCVLIDEAQFLTREQVYQLTEITDQMSIPVLAYGLRTDFRGELFPGSQFLLAWADELIELKTICHCGRKAIMNMRIDENGQAVIEGEQVLIGGNESYVATCRLHYKRGEAGKTFPRNKLFNKDTNTF.

Residues 9–16 (AAMNAGKS) and 88–91 (DEAQ) each bind ATP. Glutamate 89 acts as the Proton acceptor in catalysis. Residues cysteine 146, cysteine 148, cysteine 183, and histidine 186 each coordinate Zn(2+).

Belongs to the thymidine kinase family. As to quaternary structure, homotetramer.

Its subcellular location is the cytoplasm. The catalysed reaction is thymidine + ATP = dTMP + ADP + H(+). This Legionella pneumophila (strain Paris) protein is Thymidine kinase.